Consider the following 430-residue polypeptide: Probable transporter SCO4007 (430 aa).

The segment covering 1-17 has biased composition (low complexity); that stretch reads MPSSPSSTTPAPTSTPA. Positions 1–26 are disordered; the sequence is MPSSPSSTTPAPTSTPAARREPSGKG. 11 helical membrane-spanning segments follow: residues 34–54, 70–90, 101–121, 126–146, 159–179, 188–208, 244–264, 275–295, 315–335, 362–382, and 383–403; these read LFLP…YLAA, AVAW…LFFA, LVAA…ASAG, AGAV…VPLV, VAAV…LGGL, AVFV…AYIL, AGMY…LTEG, GLFG…GGLV, VPLF…AVLV, TAYV…AGPA, and FGHW…VLGW.

It belongs to the major facilitator superfamily.

The protein resides in the cell membrane. In Streptomyces coelicolor (strain ATCC BAA-471 / A3(2) / M145), this protein is Probable transporter SCO4007.